A 366-amino-acid chain; its full sequence is Agamous-like MADS-box protein AGL36 (366 aa).

Residues Met-1–Arg-59 enclose the MADS-box domain. A coiled-coil region spans residues Thr-86 to Met-115.

Interacts with AGL62.

It is found in the nucleus. Its function is as follows. Probable transcription factor. In Arabidopsis thaliana (Mouse-ear cress), this protein is Agamous-like MADS-box protein AGL36 (AGL36).